We begin with the raw amino-acid sequence, 249 residues long: Probable proteasome subunit alpha type-2 (249 aa).

This sequence belongs to the peptidase T1A family. As to quaternary structure, the 26S proteasome consists of a 20S proteasome core and two 19S regulatory subunits. The 20S proteasome core is composed of 28 subunits that are arranged in four stacked rings, resulting in a barrel-shaped structure. The two end rings are each formed by seven alpha subunits, and the two central rings are each formed by seven beta subunits. The catalytic chamber with the active sites is on the inside of the barrel.

The protein localises to the cytoplasm. Its subcellular location is the nucleus. In terms of biological role, the proteasome is a multicatalytic proteinase complex which is characterized by its ability to cleave peptides with Arg, Phe, Tyr, Leu, and Glu adjacent to the leaving group at neutral or slightly basic pH. The proteasome has an ATP-dependent proteolytic activity. This is Probable proteasome subunit alpha type-2 (pca-2) from Neurospora crassa (strain ATCC 24698 / 74-OR23-1A / CBS 708.71 / DSM 1257 / FGSC 987).